A 226-amino-acid polypeptide reads, in one-letter code: Orotate phosphoribosyltransferase 1 (226 aa).

Lysine 30 contributes to the 5-phospho-alpha-D-ribose 1-diphosphate binding site. An orotate-binding site is contributed by phenylalanine 38–phenylalanine 39. Residues tyrosine 76–lysine 77, arginine 106, lysine 107, lysine 110, histidine 112, and aspartate 132–alanine 140 contribute to the 5-phospho-alpha-D-ribose 1-diphosphate site. Orotate is bound by residues threonine 136 and arginine 164. Residues serine 213 and serine 225 each carry the phosphoserine modification.

This sequence belongs to the purine/pyrimidine phosphoribosyltransferase family. PyrE subfamily. Homodimer.

It carries out the reaction orotidine 5'-phosphate + diphosphate = orotate + 5-phospho-alpha-D-ribose 1-diphosphate. Its pathway is pyrimidine metabolism; UMP biosynthesis via de novo pathway; UMP from orotate: step 1/2. In terms of biological role, catalyzes the transfer of a ribosyl phosphate group from 5-phosphoribose 1-diphosphate to orotate, leading to the formation of orotidine monophosphate (OMP). The chain is Orotate phosphoribosyltransferase 1 (URA5) from Saccharomyces cerevisiae (strain ATCC 204508 / S288c) (Baker's yeast).